Here is a 615-residue protein sequence, read N- to C-terminus: Nuclear cap-binding protein subunit 3 (615 aa).

K12 participates in a covalent cross-link: Glycyl lysine isopeptide (Lys-Gly) (interchain with G-Cter in SUMO2). Positions 15–27 (APAGPALGLPSPE) are enriched in low complexity. The segment at 15–43 (APAGPALGLPSPEVESGLERGEPEPMEVE) is disordered. Residue S25 is modified to Phosphoserine. K70 participates in a covalent cross-link: Glycyl lysine isopeptide (Lys-Gly) (interchain with G-Cter in SUMO2). Position 73 is a phosphoserine (S73). Residues 126–187 (ETIYICGVDE…MSSLPAQDKM (62 aa)) are RNA recognition motif (RRM) domain. Residues 155 to 158 (WLDD) carry the WLDD motif; essential for 7-methylguanosine-containing mRNA cap binding motif. Disordered stretches follow at residues 182–233 (PAQD…LDTL) and 332–400 (HSGL…MDYD). Residues 185 to 208 (DKMRSRDASEDKSSEKNKKDKQED) show a composition bias toward basic and acidic residues. K186 is covalently cross-linked (Glycyl lysine isopeptide (Lys-Gly) (interchain with G-Cter in SUMO2)). Residues S209 and S210 each carry the phosphoserine modification. 2 stretches are compositionally biased toward acidic residues: residues 209 to 230 (SSDD…DVEL) and 341 to 360 (EPIE…DMDA). Over residues 361–383 (DDRVVVEYHEELPGLKQPRERSL) the composition is skewed to basic and acidic residues. Position 408 is a phosphothreonine (T408). Phosphoserine is present on S410. 2 disordered regions span residues 430-454 (SIRN…NKLP) and 467-615 (EKRQ…EAES). Positions 506 to 516 (VRREPSSDVHS) are enriched in basic and acidic residues. K536 is covalently cross-linked (Glycyl lysine isopeptide (Lys-Gly) (interchain with G-Cter in SUMO2)). Composition is skewed to basic and acidic residues over residues 549–564 (KTKE…RASG) and 580–593 (IKEK…KSRL). S563 carries the phosphoserine modification. Low complexity predominate over residues 606-615 (ESSSGSEAES). S615 is subject to Phosphoserine.

This sequence belongs to the NCBP3 family. As to quaternary structure, component of an alternative cap-binding complex (CBC) composed of NCBP1/CBP80 and NCBP3. Interacts with SRRT, KPNA3, THOC5 and EIF4A3.

The protein localises to the nucleus. It localises to the cytoplasm. Functionally, associates with NCBP1/CBP80 to form an alternative cap-binding complex (CBC) which plays a key role in mRNA export. NCBP3 serves as adapter protein linking the capped RNAs (m7GpppG-capped RNA) to NCBP1/CBP80. Unlike the conventional CBC with NCBP2 which binds both small nuclear RNA (snRNA) and messenger (mRNA) and is involved in their export from the nucleus, the alternative CBC with NCBP3 does not bind snRNA and associates only with mRNA thereby playing a role in only mRNA export. The alternative CBC is particularly important in cellular stress situations such as virus infections and the NCBP3 activity is critical to inhibit virus growth. In Mus musculus (Mouse), this protein is Nuclear cap-binding protein subunit 3.